Here is a 562-residue protein sequence, read N- to C-terminus: Sulfite reductase [NADPH] hemoprotein beta-component (562 aa).

Cys-425, Cys-431, Cys-470, and Cys-474 together coordinate [4Fe-4S] cluster. Cys-474 provides a ligand contact to siroheme.

The protein belongs to the nitrite and sulfite reductase 4Fe-4S domain family. In terms of assembly, alpha(8)-beta(8). The alpha component is a flavoprotein, the beta component is a hemoprotein. Siroheme is required as a cofactor. [4Fe-4S] cluster serves as cofactor.

The catalysed reaction is hydrogen sulfide + 3 NADP(+) + 3 H2O = sulfite + 3 NADPH + 4 H(+). Its pathway is sulfur metabolism; hydrogen sulfide biosynthesis; hydrogen sulfide from sulfite (NADPH route): step 1/1. Component of the sulfite reductase complex that catalyzes the 6-electron reduction of sulfite to sulfide. This is one of several activities required for the biosynthesis of L-cysteine from sulfate. The protein is Sulfite reductase [NADPH] hemoprotein beta-component of Tolumonas auensis (strain DSM 9187 / NBRC 110442 / TA 4).